The following is a 334-amino-acid chain: Protein-glutamate methylesterase FrzG (334 aa).

The 188-residue stretch at 147–334 (PYPLVAIAAS…AALMQWVDVC (188 aa)) folds into the CheB-type methylesterase domain. Active-site residues include serine 156, histidine 183, and aspartate 276.

The catalysed reaction is [protein]-L-glutamate 5-O-methyl ester + H2O = L-glutamyl-[protein] + methanol + H(+). Functionally, probable methylesterase. Required for the normal aggregation of M.xanthus cells during fruiting body formation. It is also a component of a sensory transduction pathway that controls the frequency at which cells reverse their gliding direction. It may remove the methyl group from the gamma-glutamyl methyl ester residues in FrzCD. This Myxococcus xanthus protein is Protein-glutamate methylesterase FrzG (frzG).